The chain runs to 177 residues: MSRVAKAPVVIPAGVEVKLNGQVITIKGKNGELTRTIHNAVEIQHADNQLTFAPRDGYADAWAQAGTTRSLLNAMVVGVTEGFTKKLQLVGVGYRASVKGNTVNLSVGYSHPVEHQLPAGITAECPTQTEILLKGADKQVIGQVAAELRAYRRPEPYKGKGIRYADEVVRIKEAKKK.

Belongs to the universal ribosomal protein uL6 family. In terms of assembly, part of the 50S ribosomal subunit.

Its function is as follows. This protein binds to the 23S rRNA, and is important in its secondary structure. It is located near the subunit interface in the base of the L7/L12 stalk, and near the tRNA binding site of the peptidyltransferase center. This chain is Large ribosomal subunit protein uL6, found in Proteus mirabilis (strain HI4320).